Here is a 480-residue protein sequence, read N- to C-terminus: Iron-sulfur cluster assembly SufBD family protein slr0074 (480 aa).

The protein belongs to the iron-sulfur cluster assembly SufBD family.

The polypeptide is Iron-sulfur cluster assembly SufBD family protein slr0074 (Synechocystis sp. (strain ATCC 27184 / PCC 6803 / Kazusa)).